A 272-amino-acid chain; its full sequence is NH(3)-dependent NAD(+) synthetase (272 aa).

45–52 (GISGGQDS) is an ATP binding site. D51 contributes to the Mg(2+) binding site. R138 contacts deamido-NAD(+). T158 serves as a coordination point for ATP. E163 is a Mg(2+) binding site. Residues K171 and D178 each contribute to the deamido-NAD(+) site. Positions 187 and 209 each coordinate ATP. A deamido-NAD(+)-binding site is contributed by 258 to 259 (HK).

The protein belongs to the NAD synthetase family. Homodimer.

It carries out the reaction deamido-NAD(+) + NH4(+) + ATP = AMP + diphosphate + NAD(+) + H(+). The protein operates within cofactor biosynthesis; NAD(+) biosynthesis; NAD(+) from deamido-NAD(+) (ammonia route): step 1/1. Functionally, catalyzes the ATP-dependent amidation of deamido-NAD to form NAD. Uses ammonia as a nitrogen source. This chain is NH(3)-dependent NAD(+) synthetase, found in Bacillus cereus (strain ATCC 14579 / DSM 31 / CCUG 7414 / JCM 2152 / NBRC 15305 / NCIMB 9373 / NCTC 2599 / NRRL B-3711).